The chain runs to 493 residues: Cytochrome c-552 (493 aa).

The N-terminal stretch at 1–25 (MEKKLKSWQGWLLFCGAMAVVFVLG) is a signal peptide. Heme c is bound at residue histidine 116. Heme is bound by residues cysteine 144, cysteine 147, and lysine 148. 6 residues coordinate heme c: cysteine 182, cysteine 185, histidine 186, cysteine 224, cysteine 227, and histidine 228. 4 residues coordinate Ca(2+): glutamate 230, tyrosine 231, lysine 276, and glutamine 278. Tyrosine 231 contacts substrate. Histidine 279 lines the substrate pocket. Positions 290, 297, 300, 301, 315, 328, 331, 332, and 407 each coordinate heme c.

This sequence belongs to the cytochrome c-552 family. Requires Ca(2+) as cofactor. Heme c is required as a cofactor.

It localises to the periplasm. It carries out the reaction 6 Fe(III)-[cytochrome c] + NH4(+) + 2 H2O = 6 Fe(II)-[cytochrome c] + nitrite + 8 H(+). The protein operates within nitrogen metabolism; nitrate reduction (assimilation). Functionally, catalyzes the reduction of nitrite to ammonia, consuming six electrons in the process. This chain is Cytochrome c-552, found in Bacteroides fragilis (strain YCH46).